A 99-amino-acid polypeptide reads, in one-letter code: Aspartyl/glutamyl-tRNA(Asn/Gln) amidotransferase subunit C (99 aa).

Belongs to the GatC family. In terms of assembly, heterotrimer of A, B and C subunits.

The catalysed reaction is L-glutamyl-tRNA(Gln) + L-glutamine + ATP + H2O = L-glutaminyl-tRNA(Gln) + L-glutamate + ADP + phosphate + H(+). It catalyses the reaction L-aspartyl-tRNA(Asn) + L-glutamine + ATP + H2O = L-asparaginyl-tRNA(Asn) + L-glutamate + ADP + phosphate + 2 H(+). Functionally, allows the formation of correctly charged Asn-tRNA(Asn) or Gln-tRNA(Gln) through the transamidation of misacylated Asp-tRNA(Asn) or Glu-tRNA(Gln) in organisms which lack either or both of asparaginyl-tRNA or glutaminyl-tRNA synthetases. The reaction takes place in the presence of glutamine and ATP through an activated phospho-Asp-tRNA(Asn) or phospho-Glu-tRNA(Gln). This is Aspartyl/glutamyl-tRNA(Asn/Gln) amidotransferase subunit C from Solibacter usitatus (strain Ellin6076).